Reading from the N-terminus, the 1282-residue chain is Crescerin-like protein che-12 (1282 aa).

2 TOG regions span residues 33–240 (DFDT…EHTE) and 268–515 (PSLV…MDSF). HEAT repeat units follow at residues 59-96 (QKKG…TFGS), 100-137 (YCMC…LKPE), 162-209 (ELHH…FIGN), 261-300 (RLRF…QITP), 308-345 (PHLH…HLKG), 349-386 (AHIQ…NINP), 388-421 (TVGG…TISP), and 424-461 (FNLQ…LLNG). The tract at residues 566–714 (IQQQGQAEKP…RSFDDRPAKA (149 aa)) is disordered. 2 stretches are compositionally biased toward low complexity: residues 575 to 592 (PSFS…HQAQ) and 633 to 644 (SAASNPNSSTSS). The span at 702–712 (DPPRSFDDRPA) shows a compositional bias: basic and acidic residues. TOG stretches follow at residues 800–1022 (NMSV…ANVE) and 1066–1282 (TELL…ALIR). HEAT repeat units follow at residues 838 to 875 (DNLK…NLNS), 879 to 917 (SEME…AATA), 919 to 953 (KALQ…IQGS), 961 to 998 (NALS…DPNF), 1095 to 1132 (ASDT…SMAK), 1177 to 1214 (IEPV…LAYK), and 1219 to 1258 (QVEV…LIGE).

Belongs to the Crescerin family. As to expression, detected in a subset of amphid neurons that lack wing- or finger-like ciliary extensions. Likewise, detected in phasmid neurons.

It localises to the cell projection. The protein localises to the cilium. It is found in the perikaryon. Its subcellular location is the dendrite. Functionally, required for normal structure and function of sensory cilia on amphid neurons, especially for the formation of distal ciliary structures, but is less important for normal assembly of middle and basal ciliary structures. Plays a role in the organization of axoneme microtubule bundles in sensory cilia. Required for normal structure and function of the ASER neuron that mediates attraction to NaCl. Required for normal chemotaxis to NaCl. Required for normal avoidance response to high osmolarity. In contrast, is not required for normal chemotaxis to isoamyl alcohol. Does not play a role in intraflagella transport (IFT). Promotes dauer formation in response to pheromones such as the ascarosides ascr#2, ascr#3, ascr#5, ascr#8 and icas#9. This chain is Crescerin-like protein che-12, found in Caenorhabditis elegans.